The sequence spans 477 residues: Argininosuccinate lyase (477 aa).

Belongs to the lyase 1 family. Argininosuccinate lyase subfamily.

It is found in the cytoplasm. The catalysed reaction is 2-(N(omega)-L-arginino)succinate = fumarate + L-arginine. The protein operates within amino-acid biosynthesis; L-arginine biosynthesis; L-arginine from L-ornithine and carbamoyl phosphate: step 3/3. This Corynebacterium diphtheriae (strain ATCC 700971 / NCTC 13129 / Biotype gravis) protein is Argininosuccinate lyase.